Reading from the N-terminus, the 108-residue chain is MKRLHLAPWTSLVLGLAFLSFHPVYLAEASSGSNSTSTVHHPENLETLEQCPNVDFCPQAARCCHTGVDEYGWIAAAVGWSLLFLTLILLCVDKLMKLTPDESKDLQA.

Residues 1–27 form the signal peptide; that stretch reads MKRLHLAPWTSLVLGLAFLSFHPVYLA. Over 28-71 the chain is Extracellular; sequence EASSGSNSTSTVHHPENLETLEQCPNVDFCPQAARCCHTGVDEY. An N-linked (GlcNAc...) asparagine glycan is attached at Asn34. The helical transmembrane segment at 72 to 92 threads the bilayer; it reads GWIAAAVGWSLLFLTLILLCV. Topologically, residues 93-108 are cytoplasmic; that stretch reads DKLMKLTPDESKDLQA.

The protein resides in the membrane. The protein is Transmembrane protein 213 (TMEM213) of Bos taurus (Bovine).